A 427-amino-acid polypeptide reads, in one-letter code: 3-phosphoshikimate 1-carboxyvinyltransferase (427 aa).

3 residues coordinate 3-phosphoshikimate: lysine 22, serine 23, and arginine 27. Phosphoenolpyruvate is bound at residue lysine 22. Phosphoenolpyruvate contacts are provided by glycine 96 and arginine 124. 3-phosphoshikimate is bound by residues serine 169, serine 170, glutamine 171, serine 197, aspartate 313, asparagine 336, and lysine 340. Glutamine 171 contributes to the phosphoenolpyruvate binding site. Aspartate 313 (proton acceptor) is an active-site residue. Phosphoenolpyruvate-binding residues include arginine 344, arginine 386, and lysine 411.

It belongs to the EPSP synthase family. In terms of assembly, monomer.

The protein resides in the cytoplasm. The catalysed reaction is 3-phosphoshikimate + phosphoenolpyruvate = 5-O-(1-carboxyvinyl)-3-phosphoshikimate + phosphate. The protein operates within metabolic intermediate biosynthesis; chorismate biosynthesis; chorismate from D-erythrose 4-phosphate and phosphoenolpyruvate: step 6/7. Its function is as follows. Catalyzes the transfer of the enolpyruvyl moiety of phosphoenolpyruvate (PEP) to the 5-hydroxyl of shikimate-3-phosphate (S3P) to produce enolpyruvyl shikimate-3-phosphate and inorganic phosphate. This Salmonella agona (strain SL483) protein is 3-phosphoshikimate 1-carboxyvinyltransferase.